The following is a 652-amino-acid chain: Acetyl-coenzyme A synthetase (652 aa).

CoA is bound by residues 190-193 (RGGR) and T310. ATP-binding positions include 386–388 (GEP), 410–415 (DTWWQT), D499, and R514. CoA is bound at residue S522. R525 contributes to the ATP binding site. Mg(2+)-binding residues include V536, H538, and V541. A CoA-binding site is contributed by R583. N6-acetyllysine is present on K608.

Belongs to the ATP-dependent AMP-binding enzyme family. It depends on Mg(2+) as a cofactor. Post-translationally, acetylated. Deacetylation by the SIR2-homolog deacetylase activates the enzyme.

It catalyses the reaction acetate + ATP + CoA = acetyl-CoA + AMP + diphosphate. In terms of biological role, catalyzes the conversion of acetate into acetyl-CoA (AcCoA), an essential intermediate at the junction of anabolic and catabolic pathways. AcsA undergoes a two-step reaction. In the first half reaction, AcsA combines acetate with ATP to form acetyl-adenylate (AcAMP) intermediate. In the second half reaction, it can then transfer the acetyl group from AcAMP to the sulfhydryl group of CoA, forming the product AcCoA. The protein is Acetyl-coenzyme A synthetase of Methylorubrum extorquens (strain CM4 / NCIMB 13688) (Methylobacterium extorquens).